The sequence spans 43 residues: SATVELYSNLAAKGLAVEFTSTSLKAALLNILSVDGVPATTAK.

It localises to the secreted. It is found in the cell wall. Its subcellular location is the S-layer. In terms of biological role, the S-layer is a paracrystalline mono-layered assembly of proteins which coat the surface of bacteria. The protein is S-layer protein 1 of Bacillus thuringiensis subsp. konkukian.